Consider the following 629-residue polypeptide: Arginine--tRNA ligase (629 aa).

The 'HIGH' region motif lies at Val-128–His-138.

The protein belongs to the class-I aminoacyl-tRNA synthetase family.

The protein resides in the cytoplasm. The enzyme catalyses tRNA(Arg) + L-arginine + ATP = L-arginyl-tRNA(Arg) + AMP + diphosphate. The protein is Arginine--tRNA ligase (argS) of Pyrococcus horikoshii (strain ATCC 700860 / DSM 12428 / JCM 9974 / NBRC 100139 / OT-3).